Here is a 147-residue protein sequence, read N- to C-terminus: MVHLTPEEKSAVTALWGKVNVDEVGGEALGRLLVVYPWTQRFFESFGDLSTPDAVMGNPKVKAHGKKVLGAFSDGLAHLDNLKGTFATLSELHCDKLHVDPENFKLLGNVLVCVLAHHFGKEFTPPVQAAYQKVVAGVANALAHKYH.

N-acetylvaline is present on Val2. One can recognise a Globin domain in the interval 3–147 (HLTPEEKSAV…VANALAHKYH (145 aa)). A Phosphothreonine modification is found at Thr13. At Ser45 the chain carries Phosphoserine. Lys60 bears the N6-acetyllysine mark. Heme b is bound at residue His64. Lys83 is subject to N6-acetyllysine. Residue His93 coordinates heme b. Residue Cys94 is modified to S-nitrosocysteine. Lys145 is modified (N6-acetyllysine).

This sequence belongs to the globin family. In terms of assembly, heterotetramer of two alpha chains and two beta chains. In terms of tissue distribution, red blood cells.

In terms of biological role, involved in oxygen transport from the lung to the various peripheral tissues. The polypeptide is Hemoglobin subunit beta (HBB) (Gorilla gorilla gorilla (Western lowland gorilla)).